The chain runs to 508 residues: Photosystem II CP47 reaction center protein (508 aa).

Transmembrane regions (helical) follow at residues 21 to 36 (SVHI…WAGS), 101 to 115 (IVFS…IWHW), 140 to 156 (GIHL…FGAF), 203 to 218 (IAAG…FHLS), 237 to 252 (VLSS…AFVV), and 457 to 472 (SFAL…HGAR).

This sequence belongs to the PsbB/PsbC family. PsbB subfamily. As to quaternary structure, PSII is composed of 1 copy each of membrane proteins PsbA, PsbB, PsbC, PsbD, PsbE, PsbF, PsbH, PsbI, PsbJ, PsbK, PsbL, PsbM, PsbT, PsbX, PsbY, PsbZ, Psb30/Ycf12, at least 3 peripheral proteins of the oxygen-evolving complex and a large number of cofactors. It forms dimeric complexes. Requires Binds multiple chlorophylls. PSII binds additional chlorophylls, carotenoids and specific lipids. as cofactor.

It localises to the plastid. Its subcellular location is the chloroplast thylakoid membrane. Its function is as follows. One of the components of the core complex of photosystem II (PSII). It binds chlorophyll and helps catalyze the primary light-induced photochemical processes of PSII. PSII is a light-driven water:plastoquinone oxidoreductase, using light energy to abstract electrons from H(2)O, generating O(2) and a proton gradient subsequently used for ATP formation. In Panax ginseng (Korean ginseng), this protein is Photosystem II CP47 reaction center protein.